A 478-amino-acid polypeptide reads, in one-letter code: MNPPSGPRVPPSPTQEPSCMATPAPPSWWDSSQSSISSLGRLPSISPTAPGTWAAAWVPLPTVDVPDHAHYTLGTVILLVGLTGMLGNLTVIYTFCRSRSLRTPANMFIINLAVSDFLMSFTQAPVFFTSSLYKQWLFGETGCEFYAFCGALFGISSMITLTAIALDRYLVITRPLATFGVASKRRAAFVLLGVWLYALAWSLPPFFGWSAYVPEGLLTSCSWDYMSFTPAVRAYTMLLCCFVFFLPLLIIIYCYIFIFRAIRETGRALQTFGACKGNGESLWQRQRLQSECKMAKIMLLVILLFVLSWAPYSAVALVAFAGYAHVLTPYMSSVPAVIAKASAIHNPIIYAITHPKYRVAIAQHLPCLGVLLGVSRRHSRPYPSYRSTHRSTLTSHTSNLSWISIRRRQESLGSESEVGWTHMEAAAVWGAAQQANGRSLYGQGLEDLEAKAPPRPQGHEAETPGKTKGLIPSQDPRM.

A compositionally biased stretch (pro residues) spans 1 to 14; it reads MNPPSGPRVPPSPT. Positions 1–32 are disordered; it reads MNPPSGPRVPPSPTQEPSCMATPAPPSWWDSS. The Extracellular segment spans residues 1-72; the sequence is MNPPSGPRVP…VDVPDHAHYT (72 aa). Residues 73-93 traverse the membrane as a helical segment; it reads LGTVILLVGLTGMLGNLTVIY. The Cytoplasmic portion of the chain corresponds to 94–107; it reads TFCRSRSLRTPANM. A helical transmembrane segment spans residues 108 to 128; the sequence is FIINLAVSDFLMSFTQAPVFF. Over 129-144 the chain is Extracellular; that stretch reads TSSLYKQWLFGETGCE. A disulfide bridge links C143 with C221. Residues 145–165 form a helical membrane-spanning segment; sequence FYAFCGALFGISSMITLTAIA. The Cytoplasmic segment spans residues 166–188; sequence LDRYLVITRPLATFGVASKRRAA. A helical membrane pass occupies residues 189–209; it reads FVLLGVWLYALAWSLPPFFGW. Residues 210 to 238 are Extracellular-facing; it reads SAYVPEGLLTSCSWDYMSFTPAVRAYTML. The helical transmembrane segment at 239–259 threads the bilayer; the sequence is LCCFVFFLPLLIIIYCYIFIF. The Cytoplasmic segment spans residues 260–296; it reads RAIRETGRALQTFGACKGNGESLWQRQRLQSECKMAK. The helical transmembrane segment at 297 to 317 threads the bilayer; it reads IMLLVILLFVLSWAPYSAVAL. The Extracellular segment spans residues 318–332; that stretch reads VAFAGYAHVLTPYMS. Residues 333 to 353 form a helical membrane-spanning segment; it reads SVPAVIAKASAIHNPIIYAIT. K340 is modified (N6-(retinylidene)lysine). At 354–478 the chain is on the cytoplasmic side; sequence HPKYRVAIAQ…GLIPSQDPRM (125 aa). The interval 440–478 is disordered; sequence LYGQGLEDLEAKAPPRPQGHEAETPGKTKGLIPSQDPRM. Residues 448-465 show a composition bias toward basic and acidic residues; the sequence is LEAKAPPRPQGHEAETPG.

Belongs to the G-protein coupled receptor 1 family. Opsin subfamily. As to expression, expressed in the retina.

It localises to the cell membrane. The protein localises to the cell projection. Its subcellular location is the axon. It is found in the dendrite. The protein resides in the perikaryon. Functionally, photoreceptor that binds cis-retinaldehydes. Contributes to pupillar reflex, photoentrainment and other non-image forming responses to light. May be involved in the optokinetic visual tracking response. May be involved in the regulation of retinal hyaloid vessel growth and regression. The polypeptide is Melanopsin (OPN4) (Homo sapiens (Human)).